We begin with the raw amino-acid sequence, 305 residues long: MKILVIGGPTAIGKSDLACCVAQKLNGEIISADSMAVYKFMDIGTAKPLECMKKVPHHLIDVVEPGGYFDAKIFEEMAKEKIEEIKRKGKVPIVVGGTYLYIQALLYGIDETPKPDWNLRNKLYEIARKKGNDYLYEKLKAIDPKYAKKIHKNDLRRIVRALEVFINTGKPFSSFHSWNKPKMDFVGIYLKRSPESLYKRIENRVYDMVKDGLLEEVKKLLEMGYENFLTSGQAIDYKEFVPCAKGEKSLEECIKEAIKNTKKQAKRQIRWFRKQGWHEIDLDKLSIEEACEEVVRIYKDANKTK.

Residue 8–15 (GPTAIGKS) coordinates ATP. A substrate-binding site is contributed by 10-15 (TAIGKS). The interval 33-36 (DSMA) is interaction with substrate tRNA.

The protein belongs to the IPP transferase family. As to quaternary structure, monomer. It depends on Mg(2+) as a cofactor.

It carries out the reaction adenosine(37) in tRNA + dimethylallyl diphosphate = N(6)-dimethylallyladenosine(37) in tRNA + diphosphate. Catalyzes the transfer of a dimethylallyl group onto the adenine at position 37 in tRNAs that read codons beginning with uridine, leading to the formation of N6-(dimethylallyl)adenosine (i(6)A). This chain is tRNA dimethylallyltransferase, found in Aquifex aeolicus (strain VF5).